The following is a 142-amino-acid chain: Small ribosomal subunit protein uS11 (142 aa).

The segment at 1–21 is disordered; the sequence is MPPKTRGAVRKPRRKDKKNIA. The span at 7 to 17 shows a compositional bias: basic residues; sequence GAVRKPRRKDK.

The protein belongs to the universal ribosomal protein uS11 family. Part of the 30S ribosomal subunit. Interacts with proteins S7 and S18. Binds to IF-3.

Located on the platform of the 30S subunit, it bridges several disparate RNA helices of the 16S rRNA. Forms part of the Shine-Dalgarno cleft in the 70S ribosome. This Paenarthrobacter aurescens (strain TC1) protein is Small ribosomal subunit protein uS11.